The chain runs to 273 residues: WIMGHMVNAIAQIDEFVNLGANSIETDVSFDSSANPEYTYHGIPCDCGRTCTKWEHFNEFLKGLRKATTPGDSKYHEKLVLVVFDLKTGSLYDNQASDAGKKLAKSLLQNYWNNGNNGGRAYIVLSIPNLAHYKLITGFKEALTSEGHPELMDKVGYDFSGNDDIGDVANAYKKAGVTGHVWQSDGITNCLLRGLDRVRKAVANRDSSNGYINKVYYWTVDKRQSTRDALDAGVDGIMTNYPDVIADVLNESAYKAKFRIASYDDNPWETFKN.

H5 is an active-site residue. E25 and D27 together coordinate Mg(2+). The active-site Nucleophile is the H41. 2 cysteine pairs are disulfide-bonded: C45-C51 and C47-C190. A Mg(2+)-binding site is contributed by D85. A glycan (N-linked (GlcNAc...) asparagine) is linked at N250.

It belongs to the arthropod phospholipase D family. Class II subfamily. Mg(2+) is required as a cofactor. In terms of tissue distribution, expressed by the venom gland.

The protein resides in the secreted. The enzyme catalyses an N-(acyl)-sphingosylphosphocholine = an N-(acyl)-sphingosyl-1,3-cyclic phosphate + choline. It carries out the reaction an N-(acyl)-sphingosylphosphoethanolamine = an N-(acyl)-sphingosyl-1,3-cyclic phosphate + ethanolamine. It catalyses the reaction a 1-acyl-sn-glycero-3-phosphocholine = a 1-acyl-sn-glycero-2,3-cyclic phosphate + choline. The catalysed reaction is a 1-acyl-sn-glycero-3-phosphoethanolamine = a 1-acyl-sn-glycero-2,3-cyclic phosphate + ethanolamine. Dermonecrotic toxins cleave the phosphodiester linkage between the phosphate and headgroup of certain phospholipids (sphingolipid and lysolipid substrates), forming an alcohol (often choline) and a cyclic phosphate. This toxin acts on sphingomyelin (SM). It may also act on ceramide phosphoethanolamine (CPE), lysophosphatidylcholine (LPC) and lysophosphatidylethanolamine (LPE), but not on lysophosphatidylserine (LPS), and lysophosphatidylglycerol (LPG). It acts by transphosphatidylation, releasing exclusively cyclic phosphate products as second products. Induces dermonecrosis, hemolysis, increased vascular permeability, edema, inflammatory response, and platelet aggregation. This chain is Dermonecrotic toxin LapSicTox-alphaIB1b2, found in Loxosceles apachea (Apache recluse spider).